A 264-amino-acid chain; its full sequence is Small ribosomal subunit protein eS1 (264 aa).

The protein belongs to the eukaryotic ribosomal protein eS1 family. As to quaternary structure, component of the small ribosomal subunit. Mature ribosomes consist of a small (40S) and a large (60S) subunit. The 40S subunit contains about 33 different proteins and 1 molecule of RNA (18S). The 60S subunit contains about 49 different proteins and 3 molecules of RNA (25S, 5.8S and 5S).

It localises to the cytoplasm. The chain is Small ribosomal subunit protein eS1 from Babesia bovis.